A 443-amino-acid chain; its full sequence is MAPKRHLGLGKAAKSKKQKKDDSSEVENPVQQSNELTVELNEEVDANDEVSQLRALWKTHAKSDKDNELVVNGIIHECDRLLRNSNLAENEDGEDKNKASTNEDGPKELPADFHSIYALALADLALFHSTDVNKVKEFFDAALERVDLGLQSHTGSIELLFTKSRILINQIPLQYISQLTVESKVQDGVPKIDEKLDAALKIYEEAENQAKALKQYELFNEDNLEILQAFDDLLEIVDNFGKDNSEGDESDKEDDGDYEEEIQLSKKHPLYGIRNTDKYNEWWRDHTIQFLQNVDQQLEKLGISYKQENETENALLPLRREICKRIGQSYLQEAEIPSTVFTTLKYDEGFADVDQLEGLTRDESQKISQYLFKTALDYLKMAEDKEEPESWVNIAESMISLGNLYELDSEEQENYYTEAEKILTKANNATNGKYEDILENLQT.

Positions 1–18 (MAPKRHLGLGKAAKSKKQ) are enriched in basic residues. 3 disordered regions span residues 1–44 (MAPK…NEEV), 86–107 (NLAE…DGPK), and 241–261 (GKDN…YEEE). The span at 246-261 (EGDESDKEDDGDYEEE) shows a compositional bias: acidic residues.

It belongs to the ETT1 family.

Its subcellular location is the nucleus. Required for correct translation termination and probably involved in regulation of hypoxic gene expression. The protein is Enhancer of translation termination 1 (ETT1) of Debaryomyces hansenii (strain ATCC 36239 / CBS 767 / BCRC 21394 / JCM 1990 / NBRC 0083 / IGC 2968) (Yeast).